A 215-amino-acid polypeptide reads, in one-letter code: Probable phosphoglycerate mutase GpmB (215 aa).

Substrate-binding positions include 8–15 (RHGETLWN), 21–22 (QG), R58, 82–85 (ELNM), and 151–152 (GM). H9 serves as the catalytic Tele-phosphohistidine intermediate. The active-site Proton donor/acceptor is E82.

This sequence belongs to the phosphoglycerate mutase family. GpmB subfamily.

It catalyses the reaction (2R)-2-phosphoglycerate = (2R)-3-phosphoglycerate. It participates in carbohydrate degradation; glycolysis; pyruvate from D-glyceraldehyde 3-phosphate: step 3/5. This Yersinia pseudotuberculosis serotype O:1b (strain IP 31758) protein is Probable phosphoglycerate mutase GpmB.